Consider the following 195-residue polypeptide: Sec-independent protein translocase protein TatB (195 aa).

The chain crosses the membrane as a helical span at residues 2-22 (FSNVGWGEVLVLLIVALFLIG). Over residues 103-125 (VKDTVDTVRKPNLRESLKADKTK) the composition is skewed to basic and acidic residues. The disordered stretch occupies residues 103 to 195 (VKDTVDTVRK…APGYGWEDVT (93 aa)). Composition is skewed to polar residues over residues 127–139 (SAQP…SGSA) and 146–155 (VTQQSNAGES).

The protein belongs to the TatB family. As to quaternary structure, the Tat system comprises two distinct complexes: a TatABC complex, containing multiple copies of TatA, TatB and TatC subunits, and a separate TatA complex, containing only TatA subunits. Substrates initially bind to the TatABC complex, which probably triggers association of the separate TatA complex to form the active translocon.

It localises to the cell membrane. Part of the twin-arginine translocation (Tat) system that transports large folded proteins containing a characteristic twin-arginine motif in their signal peptide across membranes. Together with TatC, TatB is part of a receptor directly interacting with Tat signal peptides. TatB may form an oligomeric binding site that transiently accommodates folded Tat precursor proteins before their translocation. This Corynebacterium jeikeium (strain K411) protein is Sec-independent protein translocase protein TatB.